The chain runs to 290 residues: 4-diphosphocytidyl-2-C-methyl-D-erythritol kinase (290 aa).

Lysine 13 is an active-site residue. ATP is bound at residue 93–103; sequence PVQAGLGGGSA. The active site involves aspartate 135.

It belongs to the GHMP kinase family. IspE subfamily.

It carries out the reaction 4-CDP-2-C-methyl-D-erythritol + ATP = 4-CDP-2-C-methyl-D-erythritol 2-phosphate + ADP + H(+). The protein operates within isoprenoid biosynthesis; isopentenyl diphosphate biosynthesis via DXP pathway; isopentenyl diphosphate from 1-deoxy-D-xylulose 5-phosphate: step 3/6. Its function is as follows. Catalyzes the phosphorylation of the position 2 hydroxy group of 4-diphosphocytidyl-2C-methyl-D-erythritol. The sequence is that of 4-diphosphocytidyl-2-C-methyl-D-erythritol kinase from Desulfitobacterium hafniense (strain Y51).